Reading from the N-terminus, the 481-residue chain is Probable squalene synthase (481 aa).

2 consecutive transmembrane segments (helical) span residues 294–314 (SVFN…ELVF) and 416–436 (FLVL…IGAA).

Belongs to the phytoene/squalene synthase family. Mg(2+) serves as cofactor.

The protein localises to the endoplasmic reticulum membrane. It catalyses the reaction 2 (2E,6E)-farnesyl diphosphate + NADPH + H(+) = squalene + 2 diphosphate + NADP(+). The enzyme catalyses 2 (2E,6E)-farnesyl diphosphate + NADH + H(+) = squalene + 2 diphosphate + NAD(+). It functions in the pathway terpene metabolism; lanosterol biosynthesis; lanosterol from farnesyl diphosphate: step 1/3. Its function is as follows. Catalyzes the condensation of 2 two farnesyl pyrophosphate moieties to form squalene. It is the first committed enzyme of the sterol biosynthesis pathway. Required for the biosynthesis of ergosterol. In Neurospora crassa (strain ATCC 24698 / 74-OR23-1A / CBS 708.71 / DSM 1257 / FGSC 987), this protein is Probable squalene synthase (erg-6).